Here is a 105-residue protein sequence, read N- to C-terminus: Class I hydrophobin 1 (105 aa).

The signal sequence occupies residues 1–17 (MQFTSFAILAISAVASA). 4 disulfide bridges follow: cysteine 36–cysteine 85, cysteine 44–cysteine 78, cysteine 45–cysteine 63, and cysteine 86–cysteine 100. Asparagine 48, asparagine 67, and asparagine 97 each carry an N-linked (GlcNAc...) asparagine glycan.

It belongs to the fungal hydrophobin family. As to quaternary structure, self-assembles to form functional amyloid fibrils called rodlets. Self-assembly into fibrillar rodlets occurs spontaneously at hydrophobic:hydrophilic interfaces and the rodlets further associate laterally to form amphipathic monolayers. In terms of tissue distribution, abundant on conidia and aerial structures formed in vitro and emerging from disease lesions on infected tomato plants.

It localises to the secreted. It is found in the cell wall. Aerial growth, conidiation, and dispersal of filamentous fungi in the environment rely upon a capability of their secreting small amphipathic proteins called hydrophobins (HPBs) with low sequence identity. Class I can self-assemble into an outermost layer of rodlet bundles on aerial cell surfaces, conferring cellular hydrophobicity that supports fungal growth, development and dispersal; whereas Class II form highly ordered films at water-air interfaces through intermolecular interactions but contribute nothing to the rodlet structure. Hcf-1 is a class I hydrophobin that is not necessary for the development of hyphae or conidia but acts as the main determinant of conidium hydrophobicity and, thus, is required for efficient water-mediated dispersal of conidia. Forms a component of the rodlet layer, but other hydrophobins must also participate in this proces. The polypeptide is Class I hydrophobin 1 (Passalora fulva (Tomato leaf mold)).